A 551-amino-acid chain; its full sequence is Solute carrier family 22 member 6 (551 aa).

At 1 to 23 the chain is on the cytoplasmic side; that stretch reads MAFNDLLKQVGGVGRFQRIQVTL. The helical transmembrane segment at 24-44 threads the bilayer; sequence VVLPLLLMASHNTLQNFTAAI. The Extracellular portion of the chain corresponds to 45–135; sequence PPHHCRPPAH…LVCSHRALRQ (91 aa). 3 N-linked (GlcNAc...) asparagine glycosylation sites follow: Asn56, Asn92, and Asn113. The chain crosses the membrane as a helical span at residues 136 to 156; it reads LGQSLYMAGVLIGAMVFGYLA. Residues 157–164 are Cytoplasmic-facing; the sequence is DRLGRRKV. A helical membrane pass occupies residues 165-187; the sequence is LILNYLQTAVSGTCAAFSPNFTV. The Extracellular portion of the chain corresponds to 188–195; that stretch reads YCTFRLLS. A helical transmembrane segment spans residues 196–216; it reads GMSLAGIALNCMTLNVEWMPI. Residues 217-224 are Cytoplasmic-facing; the sequence is HTRAYVGT. The chain crosses the membrane as a helical span at residues 225-245; the sequence is LAGYVYSTGQFLLAGVAYAVP. The Extracellular segment spans residues 246 to 248; sequence HWR. The helical transmembrane segment at 249–269 threads the bilayer; it reads YLQLLVSVPFFAFFVYSWFFI. At 270 to 337 the chain is on the cytoplasmic side; sequence ESARWYSTPG…ELLRCPALRH (68 aa). Residues 338–358 form a helical membrane-spanning segment; the sequence is LFLCLSLLWFATSFAYYGLVM. The Extracellular segment spans residues 359–368; it reads DLQGFGVSIY. A helical transmembrane segment spans residues 369 to 389; that stretch reads LIQVIFGAVDLPAKLVCFLVI. Topologically, residues 390–395 are cytoplasmic; the sequence is NSLGRR. Residues 396-416 traverse the membrane as a helical segment; sequence PAQMASLLLAGICILVNGVIP. At 417–425 the chain is on the extracellular side; that stretch reads RDQSIVRTS. A helical transmembrane segment spans residues 426–446; that stretch reads LAVLGKGCLASSFNCIFLYTG. Over 447-484 the chain is Cytoplasmic; sequence ELYPTMIRQTGLGMGSTMARVGSIVSPLVSMTSELYPS. A helical transmembrane segment spans residues 485-505; sequence LPLFIYGAVPVAASAATALLP. The Extracellular portion of the chain corresponds to 506 to 551; it reads ETLGQPLPDTVQDLESRRRGKPRRQQQEQQKQMVPLQASVQEKNGL. Positions 520–551 are disordered; the sequence is ESRRRGKPRRQQQEQQKQMVPLQASVQEKNGL.

The protein belongs to the major facilitator (TC 2.A.1) superfamily. Organic cation transporter (TC 2.A.1.19) family. Post-translationally, glycosylated. Glycosylation is necessary for proper targeting of the transporter to the plasma membrane.

The protein resides in the basolateral cell membrane. It localises to the basal cell membrane. It catalyses the reaction (6R)-L-erythro-5,6,7,8-tetrahydrobiopterin(out) + a dicarboxylate(in) = (6R)-L-erythro-5,6,7,8-tetrahydrobiopterin(in) + a dicarboxylate(out). The catalysed reaction is L-erythro-7,8-dihydrobiopterin(out) + a dicarboxylate(in) = L-erythro-7,8-dihydrobiopterin(in) + a dicarboxylate(out). It carries out the reaction L-sepiapterin(out) + a dicarboxylate(in) = L-sepiapterin(in) + a dicarboxylate(out). The enzyme catalyses prostaglandin F2alpha(out) + a dicarboxylate(in) = prostaglandin F2alpha(in) + a dicarboxylate(out). It catalyses the reaction prostaglandin E2(out) + a dicarboxylate(in) = prostaglandin E2(in) + a dicarboxylate(out). The catalysed reaction is 3',5'-cyclic AMP(out) + a dicarboxylate(in) = 3',5'-cyclic AMP(in) + a dicarboxylate(out). It carries out the reaction 3',5'-cyclic GMP(out) + a dicarboxylate(in) = 3',5'-cyclic GMP(in) + a dicarboxylate(out). The enzyme catalyses urate(out) + a dicarboxylate(in) = urate(in) + a dicarboxylate(out). It catalyses the reaction kynurenate(out) + glutarate(in) = kynurenate(in) + glutarate(out). The catalysed reaction is (indol-3-yl)acetate(out) + a dicarboxylate(in) = (indol-3-yl)acetate(in) + a dicarboxylate(out). It carries out the reaction indoxyl sulfate(out) + a dicarboxylate(in) = indoxyl sulfate(in) + a dicarboxylate(out). The enzyme catalyses N-benzoylglycine(out) + a dicarboxylate(in) = N-benzoylglycine(in) + a dicarboxylate(out). It catalyses the reaction 3-carboxy-4-methyl-5-propyl-2-furanpropanoate(out) + a dicarboxylate(in) = 3-carboxy-4-methyl-5-propyl-2-furanpropanoate(in) + a dicarboxylate(out). Functionally, secondary active transporter that functions as a Na(+)-independent organic anion (OA)/dicarboxylate antiporter where the uptake of one molecule of OA into the cell is coupled with an efflux of one molecule of intracellular dicarboxylate such as 2-oxoglutarate or glutarate. Mediates the uptake of OA across the basolateral side of proximal tubule epithelial cells, thereby contributing to the renal elimination of endogenous OA from the systemic circulation into the urine. Functions as a biopterin transporters involved in the uptake and the secretion of coenzymes tetrahydrobiopterin (BH4), dihydrobiopterin (BH2) and sepiapterin to urine, thereby determining baseline levels of blood biopterins. Transports prostaglandin E2 (PGE2) and prostaglandin F2-alpha (PGF2-alpha) and may contribute to their renal excretion. Also mediates the uptake of cyclic nucleotides such as cAMP and cGMP. Involved in the transport of neuroactive tryptophan metabolites kynurenate (KYNA) and xanthurenate (XA) and may contribute to their secretion from the brain. May transport glutamate. Also involved in the disposition of uremic toxins and potentially toxic xenobiotics by the renal organic anion secretory pathway, helping reduce their undesired toxicological effects on the body. Uremic toxins include the indoxyl sulfate (IS), hippurate/N-benzoylglycine (HA), indole acetate (IA), 3-carboxy-4- methyl-5-propyl-2-furanpropionate (CMPF) and urate. Xenobiotics include the mycotoxin ochratoxin (OTA). May also contribute to the transport of organic compounds in testes across the blood-testis-barrier. May also work as a bidirectional OA/dicarboxylate exchanger. In Oryctolagus cuniculus (Rabbit), this protein is Solute carrier family 22 member 6.